The chain runs to 514 residues: Protein spinster homolog 3 (514 aa).

The disordered stretch occupies residues 1–22; the sequence is MSTECLKPQTGGPQSQSLSQGG. Residues 9-21 are compositionally biased toward low complexity; the sequence is QTGGPQSQSLSQG. The next 12 helical transmembrane spans lie at 54-74, 88-108, 116-136, 149-169, 176-196, 212-232, 264-284, 313-333, 347-367, 376-396, 415-435, and 453-473; these read VLCY…GVLL, GLLQ…FGYL, AILS…SFIS, FVGT…GDLF, CALA…YVLG, LMPC…PDVP, FVFS…LGFW, LIFG…GAEA, LICA…LILA, VFLA…ADIL, VAHV…SSVL, and SFLC…LTAL. Positions 482-514 are disordered; the sequence is ARQPGKGTLDSKDIASRNTESQGLLSGTSTPTE. The segment covering 497-514 has biased composition (polar residues); the sequence is SRNTESQGLLSGTSTPTE.

Belongs to the major facilitator superfamily. Spinster (TC 2.A.1.49) family.

It is found in the membrane. In terms of biological role, sphingolipid transporter. The polypeptide is Protein spinster homolog 3 (Spns3) (Mus musculus (Mouse)).